The following is a 194-amino-acid chain: Segregation and condensation protein B (194 aa).

This sequence belongs to the ScpB family. In terms of assembly, homodimer. Homodimerization may be required to stabilize the binding of ScpA to the Smc head domains. Component of a cohesin-like complex composed of ScpA, ScpB and the Smc homodimer, in which ScpA and ScpB bind to the head domain of Smc. The presence of the three proteins is required for the association of the complex with DNA.

The protein resides in the cytoplasm. Functionally, participates in chromosomal partition during cell division. May act via the formation of a condensin-like complex containing Smc and ScpA that pull DNA away from mid-cell into both cell halves. In Streptococcus agalactiae serotype Ia (strain ATCC 27591 / A909 / CDC SS700), this protein is Segregation and condensation protein B.